The sequence spans 92 residues: Putative membrane protein insertion efficiency factor (92 aa).

It belongs to the UPF0161 family.

It localises to the cell inner membrane. Could be involved in insertion of integral membrane proteins into the membrane. The sequence is that of Putative membrane protein insertion efficiency factor from Synechococcus sp. (strain CC9902).